The following is a 268-amino-acid chain: Tetraspanin-33 (268 aa).

Topologically, residues 1–23 (MVRKSPGSGKEEDFTFISPVVKY) are cytoplasmic. Residues 24–44 (LLIFFNMLFWVISMVMVGIGV) form a helical membrane-spanning segment. At 45 to 63 (YARLLKHAEAAMACLAVDP) the chain is on the extracellular side. The helical transmembrane segment at 64-84 (ALLLIGVGILMFLITFCGCIG) threads the bilayer. Topologically, residues 85 to 95 (SLRENICLLQT) are cytoplasmic. The helical transmembrane segment at 96–116 (FSICLTLVFLLQLAVGIVGFI) threads the bilayer. Residues 117 to 226 (FSDKARGKVS…FIHTNGCIDR (110 aa)) lie on the Extracellular side of the membrane. 4 disulfides stabilise this stretch: Cys-155–Cys-223, Cys-156–Cys-188, Cys-172–Cys-182, and Cys-189–Cys-202. 2 N-linked (GlcNAc...) asparagine glycosylation sites follow: Asn-171 and Asn-176. Residues 227-247 (LVNWIHSNLFLLGGVALGLAI) traverse the membrane as a helical segment. The Cytoplasmic portion of the chain corresponds to 248–268 (PQVTKHLRAKLIYTWRIGIQV).

It belongs to the tetraspanin (TM4SF) family. Homodimer; disulfide-linked.

The protein resides in the cell membrane. The protein localises to the cell junction. Its subcellular location is the adherens junction. It localises to the cytoplasm. In terms of biological role, part of TspanC8 subgroup, composed of 6 members that interact with the transmembrane metalloprotease ADAM10. This interaction is required for ADAM10 exit from the endoplasmic reticulum and for enzymatic maturation and trafficking to the cell surface as well as substrate specificity. Different TspanC8/ADAM10 complexes have distinct substrates. This is Tetraspanin-33 (tspan33) from Xenopus laevis (African clawed frog).